We begin with the raw amino-acid sequence, 59 residues long: Large ribosomal subunit protein uL30 (59 aa).

Belongs to the universal ribosomal protein uL30 family. As to quaternary structure, part of the 50S ribosomal subunit.

The protein is Large ribosomal subunit protein uL30 of Photobacterium profundum (strain SS9).